A 71-amino-acid chain; its full sequence is Conotoxin Lt11.3 (71 aa).

A signal peptide spans methionine 1–alanine 26. Cystine bridges form between cysteine 27/cysteine 41, cysteine 34/cysteine 46, cysteine 40/cysteine 50, and cysteine 45/cysteine 54. Proline 57 bears the Proline amide mark. Positions threonine 61 to arginine 71 are excised as a propeptide.

The protein belongs to the conotoxin I2 superfamily. Expressed by the venom duct.

It localises to the secreted. Its function is as follows. Probable neurotoxin. This is Conotoxin Lt11.3 from Conus litteratus (Lettered cone).